Reading from the N-terminus, the 56-residue chain is UPF0391 membrane protein Rru_A0119 (56 aa).

2 consecutive transmembrane segments (helical) span residues 4 to 24 (WALI…GGIA) and 30 to 50 (IAQI…IMHF).

This sequence belongs to the UPF0391 family.

The protein resides in the cell membrane. This is UPF0391 membrane protein Rru_A0119 from Rhodospirillum rubrum (strain ATCC 11170 / ATH 1.1.1 / DSM 467 / LMG 4362 / NCIMB 8255 / S1).